We begin with the raw amino-acid sequence, 395 residues long: Elongation factor Tu (395 aa).

Positions 10–204 constitute a tr-type G domain; it reads KPHVNIGTIG…AVDSYIPTPE (195 aa). A G1 region spans residues 19–26; that stretch reads GHVDHGKT. 19 to 26 contributes to the GTP binding site; sequence GHVDHGKT. Residue T26 participates in Mg(2+) binding. The segment at 60–64 is G2; it reads GITIS. Positions 81–84 are G3; sequence DCPG. GTP contacts are provided by residues 81–85 and 136–139; these read DCPGH and NKCD. Residues 136–139 are G4; the sequence is NKCD. A G5 region spans residues 174–176; sequence SAL.

It belongs to the TRAFAC class translation factor GTPase superfamily. Classic translation factor GTPase family. EF-Tu/EF-1A subfamily. In terms of assembly, monomer. Phosphorylated on serine and/or threonine residue(s). Dephosphorylated by stp.

Its subcellular location is the cytoplasm. It catalyses the reaction GTP + H2O = GDP + phosphate + H(+). In terms of biological role, GTP hydrolase that promotes the GTP-dependent binding of aminoacyl-tRNA to the A-site of ribosomes during protein biosynthesis. This Listeria innocua serovar 6a (strain ATCC BAA-680 / CLIP 11262) protein is Elongation factor Tu.